Reading from the N-terminus, the 353-residue chain is Probable peptide ABC transporter ATP-binding protein y4tS (353 aa).

The ABC transporter domain occupies 6–256; that stretch reads LKVESLTKHY…PVHPYTEALI (251 aa). 49–56 lines the ATP pocket; the sequence is GESGCGKS.

The protein belongs to the ABC transporter superfamily.

The protein resides in the cell inner membrane. Probably part of a binding-protein-dependent transport system y4tOPQRS for a peptide. Probably responsible for energy coupling to the transport system. In Sinorhizobium fredii (strain NBRC 101917 / NGR234), this protein is Probable peptide ABC transporter ATP-binding protein y4tS.